A 330-amino-acid chain; its full sequence is Pantothenate synthetase 2 (330 aa).

His55 functions as the Proton donor in the catalytic mechanism. Residues 167-170 (GEKD), Val196, and 204-207 (ASSR) contribute to the ATP site.

The protein belongs to the pantothenate synthetase family. Homodimer.

The protein resides in the cytoplasm. The catalysed reaction is (R)-pantoate + beta-alanine + ATP = (R)-pantothenate + AMP + diphosphate + H(+). Its pathway is cofactor biosynthesis; (R)-pantothenate biosynthesis; (R)-pantothenate from (R)-pantoate and beta-alanine: step 1/1. Catalyzes the condensation of pantoate with beta-alanine in an ATP-dependent reaction via a pantoyl-adenylate intermediate. The polypeptide is Pantothenate synthetase 2 (Frankia alni (strain DSM 45986 / CECT 9034 / ACN14a)).